The following is a 556-amino-acid chain: Glutamine--tRNA ligase (556 aa).

The 'HIGH' region signature appears at 35–45; sequence PEPNGYLHIGH. ATP-binding positions include 36-38 and 42-48; these read EPN and HIGHAKS. L-glutamine is bound by residues D68 and Y213. Residues T232 and 262-263 contribute to the ATP site; that span reads RL. The 'KMSKS' region signature appears at 269 to 273; the sequence is VTSKR.

It belongs to the class-I aminoacyl-tRNA synthetase family. Monomer.

It localises to the cytoplasm. The catalysed reaction is tRNA(Gln) + L-glutamine + ATP = L-glutaminyl-tRNA(Gln) + AMP + diphosphate. In Pseudomonas aeruginosa (strain ATCC 15692 / DSM 22644 / CIP 104116 / JCM 14847 / LMG 12228 / 1C / PRS 101 / PAO1), this protein is Glutamine--tRNA ligase.